Here is a 633-residue protein sequence, read N- to C-terminus: Threonine--tRNA ligase (633 aa).

The 61-residue stretch at Met1–Thr61 folds into the TGS domain. Residues Asp242–Pro533 form a catalytic region. Zn(2+)-binding residues include Cys333, His384, and His510.

It belongs to the class-II aminoacyl-tRNA synthetase family. Homodimer. Zn(2+) is required as a cofactor.

The protein localises to the cytoplasm. The enzyme catalyses tRNA(Thr) + L-threonine + ATP = L-threonyl-tRNA(Thr) + AMP + diphosphate + H(+). Its function is as follows. Catalyzes the attachment of threonine to tRNA(Thr) in a two-step reaction: L-threonine is first activated by ATP to form Thr-AMP and then transferred to the acceptor end of tRNA(Thr). Also edits incorrectly charged L-seryl-tRNA(Thr). The polypeptide is Threonine--tRNA ligase (Ehrlichia canis (strain Jake)).